A 415-amino-acid polypeptide reads, in one-letter code: Putative O-antigen transporter (415 aa).

Residues 1–11 lie on the Cytoplasmic side of the membrane; it reads MNTNKLSLRRN. The chain crosses the membrane as a helical span at residues 12–32; the sequence is VIYLAVVQGSNYLLPLLTFPY. Residues 33-41 are Periplasmic-facing; the sequence is LVRTLGPEN. Residues 42 to 62 form a helical membrane-spanning segment; sequence FGIFGFCQATMLYMIMFVEYG. At 63-83 the chain is on the cytoplasmic side; it reads FNLTATQSIAKAADSKDKVTS. Residues 84 to 104 traverse the membrane as a helical segment; sequence IFWAVIFSKIVLIVITLIFLT. Residues 105-117 lie on the Periplasmic side of the membrane; it reads SMTLLVPEYNKHA. A helical transmembrane segment spans residues 118–138; sequence VIIWSFVPALVGNLIYPIWLF. The Cytoplasmic segment spans residues 139–173; it reads QGKEKMKWLTLSSILSRLAIIPLTFIFVNTKSDIA. The helical transmembrane segment at 174–194 threads the bilayer; sequence IAGFIQSSANLVAGIIALAIV. Over 195-220 the chain is Periplasmic; the sequence is VHEGWIGKVTLSLHNVRRSLADGFHV. A helical transmembrane segment spans residues 221–241; it reads FISTSAISLYSTGIVIILGFI. Residues 242–295 lie on the Cytoplasmic side of the membrane; that stretch reads SGPTSVGNFNAANTIRNALQGLLNPITQAIYPRISSTLVLNRVKGVILIKKSLT. A helical transmembrane segment spans residues 296–316; sequence CLSLIGGAFSLILLLGASILV. The Periplasmic portion of the chain corresponds to 317–328; that stretch reads KISIGPGYDNAV. A helical transmembrane segment spans residues 329–349; that stretch reads IVLMIISPLPFLISLSNVYGI. Over 350–362 the chain is Cytoplasmic; sequence QVMLTHNYKKEFS. The chain crosses the membrane as a helical span at residues 363-383; the sequence is KILIAAGLLSLLLIFPLTTLF. At 384 to 385 the chain is on the periplasmic side; it reads KE. The helical transmembrane segment at 386-406 threads the bilayer; sequence IGAAITLLATECLVTSLMLMF. Over 407–415 the chain is Cytoplasmic; that stretch reads VRNNKLLVC.

It belongs to the polysaccharide synthase family.

It localises to the cell inner membrane. It functions in the pathway bacterial outer membrane biogenesis; LPS O-antigen biosynthesis. In terms of biological role, may be involved in the translocation process of the nascent O-polysaccharide molecules and/or its ligation to lipid A core units. The chain is Putative O-antigen transporter (rfbX) from Escherichia coli (strain K12).